The chain runs to 105 residues: Large ribosomal subunit protein uL24 (105 aa).

It belongs to the universal ribosomal protein uL24 family. In terms of assembly, part of the 50S ribosomal subunit.

One of two assembly initiator proteins, it binds directly to the 5'-end of the 23S rRNA, where it nucleates assembly of the 50S subunit. Its function is as follows. One of the proteins that surrounds the polypeptide exit tunnel on the outside of the subunit. The protein is Large ribosomal subunit protein uL24 of Thioalkalivibrio sulfidiphilus (strain HL-EbGR7).